A 197-amino-acid polypeptide reads, in one-letter code: Nucleoid occlusion factor SlmA (197 aa).

The region spanning 7–67 (INRREHILQC…GLIDFIEESL (61 aa)) is the HTH tetR-type domain. Positions 30-49 (TTAKLAAEVGVSEAALYRHF) form a DNA-binding region, H-T-H motif.

Belongs to the nucleoid occlusion factor SlmA family. In terms of assembly, homodimer. Interacts with FtsZ.

The protein localises to the cytoplasm. Its subcellular location is the nucleoid. In terms of biological role, required for nucleoid occlusion (NO) phenomenon, which prevents Z-ring formation and cell division over the nucleoid. Acts as a DNA-associated cell division inhibitor that binds simultaneously chromosomal DNA and FtsZ, and disrupts the assembly of FtsZ polymers. SlmA-DNA-binding sequences (SBS) are dispersed on non-Ter regions of the chromosome, preventing FtsZ polymerization at these regions. The protein is Nucleoid occlusion factor SlmA of Shewanella loihica (strain ATCC BAA-1088 / PV-4).